Reading from the N-terminus, the 217-residue chain is DNA repair protein homolog YobH (217 aa).

Positions 1-68 constitute a UmuC domain; that stretch reads MAKAIQSSMW…RPLSKMWGIG (68 aa).

Belongs to the DNA polymerase type-Y family.

In Bacillus subtilis (strain 168), this protein is DNA repair protein homolog YobH (yobH).